The primary structure comprises 160 residues: 3-hydroxyacyl-[acyl-carrier-protein] dehydratase FabZ (160 aa).

The active site involves H60.

This sequence belongs to the thioester dehydratase family. FabZ subfamily.

It is found in the cytoplasm. The enzyme catalyses a (3R)-hydroxyacyl-[ACP] = a (2E)-enoyl-[ACP] + H2O. Involved in unsaturated fatty acids biosynthesis. Catalyzes the dehydration of short chain beta-hydroxyacyl-ACPs and long chain saturated and unsaturated beta-hydroxyacyl-ACPs. This Rhodospirillum rubrum (strain ATCC 11170 / ATH 1.1.1 / DSM 467 / LMG 4362 / NCIMB 8255 / S1) protein is 3-hydroxyacyl-[acyl-carrier-protein] dehydratase FabZ.